Here is a 215-residue protein sequence, read N- to C-terminus: 3-demethoxyubiquinol 3-hydroxylase (215 aa).

6 residues coordinate Fe cation: Glu64, Glu94, His97, Glu146, Glu178, and His181.

Belongs to the COQ7 family. The cofactor is Fe cation.

Its subcellular location is the cell membrane. It carries out the reaction a 5-methoxy-2-methyl-3-(all-trans-polyprenyl)benzene-1,4-diol + AH2 + O2 = a 3-demethylubiquinol + A + H2O. Its pathway is cofactor biosynthesis; ubiquinone biosynthesis. Its function is as follows. Catalyzes the hydroxylation of 2-nonaprenyl-3-methyl-6-methoxy-1,4-benzoquinol during ubiquinone biosynthesis. This Pseudomonas savastanoi pv. phaseolicola (strain 1448A / Race 6) (Pseudomonas syringae pv. phaseolicola (strain 1448A / Race 6)) protein is 3-demethoxyubiquinol 3-hydroxylase.